The sequence spans 397 residues: (S)-8-oxocitronellyl enol synthase ISY2 (397 aa).

Residues 36–38, 64–65, 82–83, 106–107, glutamine 144, tyrosine 180, isoleucine 207, and 214–216 contribute to the NADP(+) site; these read TGL, RR, DV, TW, and SMM. Residue tyrosine 180 is part of the active site.

This sequence belongs to the short-chain dehydrogenases/reductases (SDR) family.

It carries out the reaction (S)-8-oxocitronellyl enol + NADP(+) = (6E)-8-oxogeranial + NADPH + H(+). The catalysed reaction is (S)-8-oxocitronellyl enol + NAD(+) = (6E)-8-oxogeranial + NADH + H(+). Iridoid synthase that catalyzes the first step in generation of the iridoid ring scaffold using the linear monoterpene (6E)-8-oxogeranial as substrate. Iridoids comprise a large family of distinctive bicyclic monoterpenes that possess a wide range of pharmacological activities, including anticancer, anti-inflammatory, antifungal and antibacterial activities. Catalyzes the conversion of the linear monoterpene (6E)-8-oxogeranial to (S)-8-oxocitronellyl enol, a precursor of nepetalactones, which are metabolites that are both insect-repellent and have euphoric effect in cats. This is (S)-8-oxocitronellyl enol synthase ISY2 from Nepeta cataria (Catnip).